The primary structure comprises 765 residues: Alpha,alpha-trehalose phosphorylase (765 aa).

352–353 (WD) serves as a coordination point for substrate. E479 functions as the Proton donor in the catalytic mechanism. 591 to 592 (KQ) provides a ligand contact to substrate.

The protein belongs to the glycosyl hydrolase 65 family. Homodimer.

It catalyses the reaction alpha,alpha-trehalose + phosphate = beta-D-glucose 1-phosphate + D-glucose. Its pathway is glycan degradation; trehalose degradation. Functionally, catalyzes the reversible phosphorolytic cleavage of trehalose. Phosphorolysis is specific for trehalose. The protein is Alpha,alpha-trehalose phosphorylase (treP) of Geobacillus stearothermophilus (Bacillus stearothermophilus).